The chain runs to 258 residues: 5'-nucleotidase SurE (258 aa).

A divalent metal cation is bound by residues D9, D10, S42, and N96.

This sequence belongs to the SurE nucleotidase family. A divalent metal cation is required as a cofactor.

It is found in the cytoplasm. It carries out the reaction a ribonucleoside 5'-phosphate + H2O = a ribonucleoside + phosphate. Its function is as follows. Nucleotidase that shows phosphatase activity on nucleoside 5'-monophosphates. The chain is 5'-nucleotidase SurE from Campylobacter jejuni subsp. jejuni serotype O:23/36 (strain 81-176).